We begin with the raw amino-acid sequence, 151 residues long: Small ribosomal subunit protein uS15 (151 aa).

The interval 1–20 is disordered; it reads MARLHSGKRGSSGSTRPLRT.

It belongs to the universal ribosomal protein uS15 family. As to quaternary structure, part of the 30S ribosomal subunit.

This Methanococcus maripaludis (strain C5 / ATCC BAA-1333) protein is Small ribosomal subunit protein uS15.